A 449-amino-acid chain; its full sequence is uncharacterized protein (449 aa).

Helical transmembrane passes span 1 to 21, 26 to 46, 51 to 71, 97 to 117, 137 to 157, 178 to 198, 223 to 243, 244 to 264, 285 to 305, 310 to 330, 340 to 360, 377 to 397, and 425 to 445; these read MVAN…ILLI, IHLT…HVIT, IDYI…MVLV, LLML…PNAT, FVPI…LTLV, FKLS…TPFL, VLMA…IGES, LPVP…ALLL, LIFF…GVTA, LLAV…VFTV, IPLV…IGFA, VLPL…GTLV, and GLPV…WLMF.

It belongs to the CitM (TC 2.A.11) transporter family.

Its subcellular location is the cell membrane. This is an uncharacterized protein from Synechocystis sp. (strain ATCC 27184 / PCC 6803 / Kazusa).